A 138-amino-acid polypeptide reads, in one-letter code: Glutaredoxin-C7 (138 aa).

Residues 17 to 40 (SSTRGGGGGGMLGLTLFDPPGGEQ) are disordered. The Glutaredoxin domain maps to 42–137 (AERIGRLVRE…PRLREVGALC (96 aa)). Cys62 and Cys65 are oxidised to a cystine.

The protein belongs to the glutaredoxin family. CC-type subfamily.

The protein resides in the cytoplasm. Has a glutathione-disulfide oxidoreductase activity in the presence of NADPH and glutathione reductase. Reduces low molecular weight disulfides and proteins. The polypeptide is Glutaredoxin-C7 (GRXC7) (Oryza sativa subsp. japonica (Rice)).